We begin with the raw amino-acid sequence, 101 residues long: Small ribosomal subunit protein uS14 (101 aa).

It belongs to the universal ribosomal protein uS14 family. Part of the 30S ribosomal subunit. Contacts proteins S3 and S10.

Functionally, binds 16S rRNA, required for the assembly of 30S particles and may also be responsible for determining the conformation of the 16S rRNA at the A site. This is Small ribosomal subunit protein uS14 from Leifsonia xyli subsp. xyli (strain CTCB07).